The following is a 529-amino-acid chain: Basal body-orientation factor 1 (529 aa).

Over residues 1-13 the composition is skewed to basic residues; the sequence is MPSKGKDKKKGKS. The disordered stretch occupies residues 1–22; the sequence is MPSKGKDKKKGKSRGKDTKKLI. 2 coiled-coil regions span residues 55–198 and 271–361; these read DTSR…LKQE and IKEK…EVER. Residues 510–529 are disordered; that stretch reads GKVVLPTIPKGPQESDTGTF.

The protein belongs to the BBOF1 family. As to quaternary structure, interacts with MNS1 and ODF2.

It localises to the cytoplasm. The protein localises to the cytoskeleton. Its subcellular location is the cilium basal body. It is found in the flagellum axoneme. Plays an essential role in sperm motility and male fertility by stabilizing the sperm flagellar axonemal structure. May be required for the stability of ODF2 and MANS1 proteins. Dispensable for the assembly and function of motile cilia. The sequence is that of Basal body-orientation factor 1 from Macaca fascicularis (Crab-eating macaque).